The primary structure comprises 298 residues: MSTQPLVITLLGPTASGKTALALELAERLGLPVINVDSRQLYREMDVGTAKPTAEQQARVTHHLLDLRDPNQPITLQEFQAEATPCIERELSERGIALLVGGSGLYLKALTSGLKPPAVGPQPELRKQFSAMGQAVCHPLLAAADPIAAAKISPADVVRTQRALEVLYASGQPMSGQASVEPPPWRILELGLNPTNLRQRINQRTEQLYQDGLVEETQRLADRYGADLPLLQTIGYGEALQINDGSITRQAAIATTCQRTRQFAKRQRTWFRRQHTPQWLSEQDLLTEAMTLIEQHLG.

12 to 19 (GPTASGKT) provides a ligand contact to ATP. 14 to 19 (TASGKT) is a binding site for substrate. The interaction with substrate tRNA stretch occupies residues 37-40 (DSRQ).

This sequence belongs to the IPP transferase family. As to quaternary structure, monomer. It depends on Mg(2+) as a cofactor.

It carries out the reaction adenosine(37) in tRNA + dimethylallyl diphosphate = N(6)-dimethylallyladenosine(37) in tRNA + diphosphate. Its function is as follows. Catalyzes the transfer of a dimethylallyl group onto the adenine at position 37 in tRNAs that read codons beginning with uridine, leading to the formation of N6-(dimethylallyl)adenosine (i(6)A). This is tRNA dimethylallyltransferase from Synechococcus sp. (strain CC9902).